Here is a 130-residue protein sequence, read N- to C-terminus: Small ribosomal subunit protein uS9 (130 aa).

The protein belongs to the universal ribosomal protein uS9 family.

The chain is Small ribosomal subunit protein uS9 from Stenotrophomonas maltophilia (strain R551-3).